The sequence spans 201 residues: MELVLKDAQSALEVSETTFGRDFNEALVHQVVVAYAANARQGTRAQKTRAEVVGSGKKPWRQKGTGRARAGTVKGPIWRGGGVTFAAKAQDHSQKVNKKMYRGALKSIFSELVRQDRLIVVESFGVEAPKTKELKAKLAEMNLEDVLIVTPEIDENLFLAARNLYKVDVRDVAGIDPVSLIAFNKVLVTADAVKQIEEMLG.

Positions 46–71 (QKTRAEVVGSGKKPWRQKGTGRARAG) are disordered.

The protein belongs to the universal ribosomal protein uL4 family. As to quaternary structure, part of the 50S ribosomal subunit.

One of the primary rRNA binding proteins, this protein initially binds near the 5'-end of the 23S rRNA. It is important during the early stages of 50S assembly. It makes multiple contacts with different domains of the 23S rRNA in the assembled 50S subunit and ribosome. Its function is as follows. Forms part of the polypeptide exit tunnel. The chain is Large ribosomal subunit protein uL4 from Shewanella woodyi (strain ATCC 51908 / MS32).